We begin with the raw amino-acid sequence, 421 residues long: ATP-dependent RNA helicase eIF4A (421 aa).

The segment at 1–26 (MSNDKGLEEIPEDQSTTPHKPTSNVG) is disordered. The segment covering 13–26 (DQSTTPHKPTSNVG) has biased composition (polar residues). The short motif at 48-76 (DSFDAMELKPELLRGVYAYGFERPSAIQQ) is the Q motif element. One can recognise a Helicase ATP-binding domain in the interval 79 to 249 (IKPIIKGSDV…TKFMRDPVRI (171 aa)). 92–99 (AQSGTGKT) lines the ATP pocket. Residues 197–200 (DEAD) carry the DEAD box motif. A Helicase C-terminal domain is found at 260-421 (GIKQFYIAVE…EMPMNVADLI (162 aa)).

This sequence belongs to the DEAD box helicase family. eIF4A subfamily. As to quaternary structure, component of the eIF4F complex, which composition varies with external and internal environmental conditions. It is composed of at least eIF4A, eIF4E and eIF4G.

Its subcellular location is the cytoplasm. The catalysed reaction is ATP + H2O = ADP + phosphate + H(+). Its function is as follows. ATP-dependent RNA helicase which is a subunit of the eIF4F complex involved in cap recognition and is required for mRNA binding to ribosome. In the current model of translation initiation, eIF4A unwinds RNA secondary structures in the 5'-UTR of mRNAs which is necessary to allow efficient binding of the small ribosomal subunit, and subsequent scanning for the initiator codon. In Aspergillus oryzae (strain ATCC 42149 / RIB 40) (Yellow koji mold), this protein is ATP-dependent RNA helicase eIF4A (tif1).